We begin with the raw amino-acid sequence, 373 residues long: MNGNCYKRIVIKLGTSLLTGGTGKLDHERMADLCRQIADLTRLGTEVIIVSSGAIAAGRAKMGLRHIPKDVPFKQVLAAIGQSQLMNYYDQLFSPHGLTVAQGLLTKSDLSDRSGYLNARNTLLALMELGVITIVNENDVVAVDEIQQAKFGDNDNLSAMVANLIEADLLLILTNIRGLYTADPTLHPDARLITEVKEITEELEKLAAGSSNKLGTGGMVTKLEAARLATSSGVNVIIADGHIPDIILKLASGETEGTRFMPSLHKPDSRQRWMMSGLCTRGNICIDDGAVKAIRENQKSLLAAGVQQSEGKFGRGDIVKLSDSRGKRLGYGITNYSSDDVSKIKGLHTDEINTVLAGNQGPEIIHRNNLVVI.

Lys12 contacts ATP. Substrate is bound by residues Ser52, Asp139, and Asn154. Position 216–222 (216–222) interacts with ATP; sequence TGGMVTK. In terms of domain architecture, PUA spans 281-359; the sequence is RGNICIDDGA…DEINTVLAGN (79 aa).

It belongs to the glutamate 5-kinase family.

The protein localises to the cytoplasm. The catalysed reaction is L-glutamate + ATP = L-glutamyl 5-phosphate + ADP. Its pathway is amino-acid biosynthesis; L-proline biosynthesis; L-glutamate 5-semialdehyde from L-glutamate: step 1/2. Functionally, catalyzes the transfer of a phosphate group to glutamate to form L-glutamate 5-phosphate. This is Glutamate 5-kinase from Dehalococcoides mccartyi (strain ATCC BAA-2266 / KCTC 15142 / 195) (Dehalococcoides ethenogenes (strain 195)).